A 1103-amino-acid chain; its full sequence is Retinal guanylyl cyclase 2 (1103 aa).

Residues 1–46 (MFLAPWPFSHLMLWFVTLGRQRGQHGLASFKLLWCLWLLVLMSLPL) form the signal peptide. Topologically, residues 47 to 465 (QVWAPPYKIG…DGRICQGGIN (419 aa)) are extracellular. Cysteine 104 and cysteine 132 are disulfide-bonded. The chain crosses the membrane as a helical span at residues 466 to 490 (PTFALMVCLALLIALLSINGFAYFI). Residues 491–1103 (RHRINKIQLI…FQRRKQKSSW (613 aa)) are Cytoplasmic-facing. In terms of domain architecture, Protein kinase spans 532-812 (FQITSEVQSG…DEIFNQFKTF (281 aa)). Residues 884–1014 (TLYFSDIVGF…DTVNTASRME (131 aa)) enclose the Guanylate cyclase domain.

The protein belongs to the adenylyl cyclase class-4/guanylyl cyclase family. As to quaternary structure, homodimer. Interacts with RD3; promotes the exit of GUCY2F from the endoplasmic reticulum and its trafficking to the photoreceptor outer segments. There are 9 conserved cysteine residues in sensory guanylate cyclases, 6 in the extracellular domain, which may be involved in intra- or interchain disulfide bonds. In terms of tissue distribution, expressed specifically in retina.

The protein localises to the membrane. Its subcellular location is the photoreceptor outer segment membrane. It carries out the reaction GTP = 3',5'-cyclic GMP + diphosphate. With respect to regulation, activated by GUCA1B when free calcium ions concentration is low, and inhibited by GUCA1B when free calcium ions concentration is high. Inhibited by RD3. In terms of biological role, responsible for the synthesis of cyclic GMP (cGMP) in rods and cones of photoreceptors. Plays an essential role in phototransduction, by mediating cGMP replenishment. May also participate in the trafficking of membrane-asociated proteins to the photoreceptor outer segment membrane. In Bos taurus (Bovine), this protein is Retinal guanylyl cyclase 2 (GUCY2F).